The following is a 194-amino-acid chain: Early growth response protein 1 (194 aa).

3 C2H2-type zinc fingers span residues 1-18 (CDRR…IRIH), 24-46 (FQCR…IRTH), and 52-74 (FACD…TKIH).

It belongs to the EGR C2H2-type zinc-finger protein family.

The protein resides in the nucleus. It is found in the cytoplasm. Functionally, transcriptional regulator. Recognizes and binds to the DNA sequence 5'-GCG(T/G)GGGCG-3'(EGR-site) in the promoter region of target genes. Binds double-stranded target DNA, irrespective of the cytosine methylation status. Regulates the transcription of numerous target genes, and thereby plays an important role in regulating the response to growth factors, DNA damage, and ischemia. Plays a role in the regulation of cell survival, proliferation and cell death. Mediates responses to ischemia and hypoxia; regulates the expression of proteins that are involved in inflammatory processes. Plays a role in regulating the expression of circadian clock genes. This chain is Early growth response protein 1 (EGR1), found in Gallus gallus (Chicken).